We begin with the raw amino-acid sequence, 183 residues long: MSTEKEKMIAGELYRSADETLSRDRLRARQLIHRYNHSLAEEHTLRQQILADLFGQVTEAYIEPTFRCDYGYNIFLGNNFFANFDCVMLDVCPIRIGDNCMLAPGVHIYTATHPIDPVARNSGAELGKPVTIGNNVWIGGRAVINPGVTIGDNVVVASGAVVTKDVPDNVVVGGNPARIIKKL.

An acetyl-CoA-binding site is contributed by asparagine 83. Histidine 113 (proton donor/acceptor) is an active-site residue. Acetyl-CoA-binding positions include glycine 140, serine 158, 163–164 (TK), arginine 178, and lysine 181.

Belongs to the transferase hexapeptide repeat family. As to quaternary structure, homodimer.

The enzyme catalyses D-maltose + acetyl-CoA = 1-O-acetylmaltose + CoA. Catalyzes the CoA-dependent transfer of an acetyl group to maltose and other sugars. Acetylates glucose exclusively at the C6 position and maltose at the C6 position of the non-reducing end glucosyl moiety. Is able to acetylate maltooligosaccharides. This is Maltose O-acetyltransferase (maa) from Escherichia coli (strain K12).